Reading from the N-terminus, the 156-residue chain is Small ribosomal subunit protein uS7 (156 aa).

It belongs to the universal ribosomal protein uS7 family. Part of the 30S ribosomal subunit. Contacts proteins S9 and S11.

Functionally, one of the primary rRNA binding proteins, it binds directly to 16S rRNA where it nucleates assembly of the head domain of the 30S subunit. Is located at the subunit interface close to the decoding center, probably blocks exit of the E-site tRNA. The polypeptide is Small ribosomal subunit protein uS7 (Listeria innocua serovar 6a (strain ATCC BAA-680 / CLIP 11262)).